The sequence spans 316 residues: Ribosomal RNA small subunit methyltransferase H (316 aa).

Residues G35–H37, D55, F79, D101, and Q108 contribute to the S-adenosyl-L-methionine site.

Belongs to the methyltransferase superfamily. RsmH family.

It localises to the cytoplasm. The enzyme catalyses cytidine(1402) in 16S rRNA + S-adenosyl-L-methionine = N(4)-methylcytidine(1402) in 16S rRNA + S-adenosyl-L-homocysteine + H(+). Functionally, specifically methylates the N4 position of cytidine in position 1402 (C1402) of 16S rRNA. The sequence is that of Ribosomal RNA small subunit methyltransferase H from Vibrio parahaemolyticus serotype O3:K6 (strain RIMD 2210633).